A 78-amino-acid chain; its full sequence is Large ribosomal subunit protein uL29 (78 aa).

It belongs to the universal ribosomal protein uL29 family.

This chain is Large ribosomal subunit protein uL29, found in Rhodococcus opacus (strain B4).